The chain runs to 324 residues: Lactonase drp35 (324 aa).

Ca(2+)-binding residues include E47, S109, G111, D129, T132, Y134, D137, N184, D235, and S236. D235 acts as the Proton donor in catalysis.

Belongs to the SMP-30/CGR1 family. Ca(2+) is required as a cofactor.

Its subcellular location is the cytoplasm. Its function is as follows. Exhibits lactonase activity. Acts in cells with perturbed membrane integrity and is possibly related to the membrane homeostasis. This Staphylococcus aureus (strain MW2) protein is Lactonase drp35 (drp35).